The sequence spans 227 residues: Cytochrome c oxidase subunit 2 (227 aa).

Residues 1 to 14 are Mitochondrial intermembrane-facing; it reads MAYPLQMGLQDATS. A helical transmembrane segment spans residues 15 to 45; the sequence is PIMEELLHFHDHTLMIVFLISSLVLYIISLM. The Mitochondrial matrix segment spans residues 46–59; sequence LTTKLTHTSTMDAQ. A helical transmembrane segment spans residues 60-87; it reads EVETVWTILPAIILILIALPSLRILYMM. Topologically, residues 88–227 are mitochondrial intermembrane; it reads DEINNPSLTV…HFEKWSTSML (140 aa). Residues histidine 161, cysteine 196, glutamate 198, cysteine 200, histidine 204, and methionine 207 each coordinate Cu cation. Glutamate 198 is a binding site for Mg(2+).

The protein belongs to the cytochrome c oxidase subunit 2 family. In terms of assembly, component of the cytochrome c oxidase (complex IV, CIV), a multisubunit enzyme composed of 14 subunits. The complex is composed of a catalytic core of 3 subunits MT-CO1, MT-CO2 and MT-CO3, encoded in the mitochondrial DNA, and 11 supernumerary subunits COX4I, COX5A, COX5B, COX6A, COX6B, COX6C, COX7A, COX7B, COX7C, COX8 and NDUFA4, which are encoded in the nuclear genome. The complex exists as a monomer or a dimer and forms supercomplexes (SCs) in the inner mitochondrial membrane with NADH-ubiquinone oxidoreductase (complex I, CI) and ubiquinol-cytochrome c oxidoreductase (cytochrome b-c1 complex, complex III, CIII), resulting in different assemblies (supercomplex SCI(1)III(2)IV(1) and megacomplex MCI(2)III(2)IV(2)). Found in a complex with TMEM177, COA6, COX18, COX20, SCO1 and SCO2. Interacts with TMEM177 in a COX20-dependent manner. Interacts with COX20. Interacts with COX16. The cofactor is Cu cation.

The protein localises to the mitochondrion inner membrane. The enzyme catalyses 4 Fe(II)-[cytochrome c] + O2 + 8 H(+)(in) = 4 Fe(III)-[cytochrome c] + 2 H2O + 4 H(+)(out). Component of the cytochrome c oxidase, the last enzyme in the mitochondrial electron transport chain which drives oxidative phosphorylation. The respiratory chain contains 3 multisubunit complexes succinate dehydrogenase (complex II, CII), ubiquinol-cytochrome c oxidoreductase (cytochrome b-c1 complex, complex III, CIII) and cytochrome c oxidase (complex IV, CIV), that cooperate to transfer electrons derived from NADH and succinate to molecular oxygen, creating an electrochemical gradient over the inner membrane that drives transmembrane transport and the ATP synthase. Cytochrome c oxidase is the component of the respiratory chain that catalyzes the reduction of oxygen to water. Electrons originating from reduced cytochrome c in the intermembrane space (IMS) are transferred via the dinuclear copper A center (CU(A)) of subunit 2 and heme A of subunit 1 to the active site in subunit 1, a binuclear center (BNC) formed by heme A3 and copper B (CU(B)). The BNC reduces molecular oxygen to 2 water molecules using 4 electrons from cytochrome c in the IMS and 4 protons from the mitochondrial matrix. The protein is Cytochrome c oxidase subunit 2 (MT-CO2) of Phoca vitulina (Harbor seal).